The primary structure comprises 334 residues: Putative binding protein YtlA (334 aa).

The signal sequence occupies residues methionine 1 to alanine 23. Cysteine 24 carries the N-palmitoyl cysteine lipid modification. The S-diacylglycerol cysteine moiety is linked to residue cysteine 24.

Belongs to the bacterial solute-binding protein SsuA/TauA family.

It localises to the cell membrane. This is Putative binding protein YtlA (ytlA) from Bacillus subtilis (strain 168).